Reading from the N-terminus, the 244-residue chain is ATP synthase subunit a (244 aa).

Helical transmembrane passes span 20–40, 81–101, 113–133, 140–160, 176–196, 202–222, and 223–243; these read FFDI…VIVI, GILF…LNVM, QLLV…IWGF, FLNI…LVFI, LFAN…AAIY, FIGI…LGIA, and FLQA…IINL.

It belongs to the ATPase A chain family. F-type ATPases have 2 components, CF(1) - the catalytic core - and CF(0) - the membrane proton channel. CF(1) has five subunits: alpha(3), beta(3), gamma(1), delta(1), epsilon(1). CF(0) has three main subunits: a, b and c.

It localises to the mitochondrion inner membrane. Mitochondrial membrane ATP synthase (F(1)F(0) ATP synthase or Complex V) produces ATP from ADP in the presence of a proton gradient across the membrane which is generated by electron transport complexes of the respiratory chain. F-type ATPases consist of two structural domains, F(1) - containing the extramembraneous catalytic core and F(0) - containing the membrane proton channel, linked together by a central stalk and a peripheral stalk. During catalysis, ATP synthesis in the catalytic domain of F(1) is coupled via a rotary mechanism of the central stalk subunits to proton translocation. Key component of the proton channel; it may play a direct role in the translocation of protons across the membrane. This Dictyostelium discoideum (Social amoeba) protein is ATP synthase subunit a (atp6).